The chain runs to 408 residues: Tyrosine--tRNA ligase (408 aa).

Tyr35 provides a ligand contact to L-tyrosine. Residues Pro40–His49 carry the 'HIGH' region motif. Residues Tyr168 and Gln172 each coordinate L-tyrosine. Residues Lys228–Thr232 carry the 'KMSKS' region motif. An ATP-binding site is contributed by Lys231. The region spanning Ile342–Leu407 is the S4 RNA-binding domain.

It belongs to the class-I aminoacyl-tRNA synthetase family. TyrS type 1 subfamily. As to quaternary structure, homodimer.

The protein resides in the cytoplasm. It catalyses the reaction tRNA(Tyr) + L-tyrosine + ATP = L-tyrosyl-tRNA(Tyr) + AMP + diphosphate + H(+). In terms of biological role, catalyzes the attachment of tyrosine to tRNA(Tyr) in a two-step reaction: tyrosine is first activated by ATP to form Tyr-AMP and then transferred to the acceptor end of tRNA(Tyr). The protein is Tyrosine--tRNA ligase of Acetivibrio thermocellus (strain ATCC 27405 / DSM 1237 / JCM 9322 / NBRC 103400 / NCIMB 10682 / NRRL B-4536 / VPI 7372) (Clostridium thermocellum).